Consider the following 1096-residue polypeptide: MFNTTFANRTLPDLVEIQRASFCWFLNEGLAEEIQSFSPIVNYTGNLELHLFGDQYTLRYPKHNINECKRRDTTYSVQIYVPAQLINRETGVIKEQEVFIGDLPLMTDRGTFIINGAERVIVNQIVRSPGIYYKSELDKQGRRTYSSSLISNRGAWVKFETDRNDLVWVRIDKTRKIPAHVFLKAMGLSDTDIYNGLRHPEYLKKTFRFEGNYTTETALIQMYNKLRPGEPATVTGGQQLLYSRFFDPKRYDLGKVGRYKLNKKLNLSVPENVRVLTPQDTLAAIDYLINLKFEIGETDDIDHLGNRRVRSVGELLQNQVRIGLNRLERIIRERMTICDITSLTPNTLVNPKPIIASIREFFGSSQLSQFMDQTNPLAELTHKRRISALGPGGLNRDRAGFGVRDIHPSHYGRICPIETPEGPNAGLIGVLATHARINTYGFIEAPFFKVQDGQVYNHSQPIYLTADQEDKYRIAPGDITLDETNRIATKIVPIKYRQEFTTTKPNQVDFIAVSPIQVISIATSLIPFLEHDDANRALMGSNMQRQAVPLLYPESPLVGTGLEAQAARDSGMVVVSIEDGQVTFVSGDKICVTNKKGDEIAYYLQKYQRSNQDTCINQRPTVWLGEDVIEGQVIADGAATEGGELALGQNILVAYLPWEGYNYEDAFLINERLVYNDVYTSVHIEKYEIEARQTKLGSEEITRELPNVGEAALRKLDENGIIVIGSWVEAGDILIGKVTPKGESDQPPEGKLLRAIFGEKARDVRDTSLRVPNGGRGRILDVRIFTREKGDELPTGANIVIRVYIAQSRKIQVGDKMAGRHGNKGIISRILPRQDMPYLPDGTPVDLVLNPLGVPSRMNVGQIFECLLGLAAENLNKRFKITPFDEMHGAEASRVLVNEKLNEAKIKTGENWLFDLRHPGKITLYDGRTGEAFDNPVTIGVSYMLKLVHLVDDKIHARSTGPYSLVTQQPLGGRAQHGGQRLGEMEVWALEAFGASYTLQELLTVKSDDMQGRNETLNAIVKGKPIPRPGTPESFKVLMRELQSLGLDIGAYKIENLPDGQTRGIEVDLMMNYQQSRLFKPLYESMQTKNNENLFL.

Belongs to the RNA polymerase beta chain family. In terms of assembly, in plastids the minimal PEP RNA polymerase catalytic core is composed of four subunits: alpha, beta, beta', and beta''. When a (nuclear-encoded) sigma factor is associated with the core the holoenzyme is formed, which can initiate transcription.

Its subcellular location is the plastid. The protein localises to the chloroplast. It catalyses the reaction RNA(n) + a ribonucleoside 5'-triphosphate = RNA(n+1) + diphosphate. In terms of biological role, DNA-dependent RNA polymerase catalyzes the transcription of DNA into RNA using the four ribonucleoside triphosphates as substrates. This Guillardia theta (Cryptophyte) protein is DNA-directed RNA polymerase subunit beta.